A 658-amino-acid chain; its full sequence is Probable methyl-accepting chemotaxis protein BT9727_0469 (658 aa).

The Cytoplasmic segment spans residues 1 to 14 (MLQGKLRRSSLKAK). Residues 15 to 35 (LLVSFVIVLILPSIVIGWTSY) traverse the membrane as a helical segment. Residues 36-283 (QQAKTNFNET…ANPIFYKTLT (248 aa)) lie on the Extracellular side of the membrane. Positions 44–109 (ETILQSAEDN…NKLHPEIEAI (66 aa)) form a coiled coil. The 72-residue stretch at 150 to 221 (ITAPYKSSTT…AHPTMKPGDK (72 aa)) folds into the Cache domain. A helical membrane pass occupies residues 284-304 (VIGISLIIGGVLIYFIIASII). The HAMP domain occupies 301-353 (ASIISPLKQLVISSKKISEGDLTETITVHSKDEIGQLGESFNEMAASLHHVIS). The Cytoplasmic segment spans residues 305–658 (SPLKQLVISS…LQEMIGKFKV (354 aa)). Glu368 carries the glutamate methyl ester (Glu) modification. Residues 372–622 (SMKQTSEATE…ENAASVQNIA (251 aa)) form the Methyl-accepting transducer domain. Gln592 carries the deamidated glutamine modification. Glutamate methyl ester (Gln) is present on Gln592. Glu627 and Glu634 each carry glutamate methyl ester (Glu).

Belongs to the methyl-accepting chemotaxis (MCP) protein family.

It is found in the cell membrane. Functionally, chemotactic-signal transducers respond to changes in the concentration of attractants and repellents in the environment, transduce a signal from the outside to the inside of the cell, and facilitate sensory adaptation through the variation of the level of methylation. In Bacillus thuringiensis subsp. konkukian (strain 97-27), this protein is Probable methyl-accepting chemotaxis protein BT9727_0469.